The chain runs to 223 residues: Ribonuclease DdI (223 aa).

The N-terminal stretch at 1–25 (MRLIAALLSVLLIASTAQSTVTIYE) is a signal peptide. Cys46 and Cys51 are oxidised to a cystine. Active-site residues include His63, Glu113, and His117. An intrachain disulfide couples Cys78 to Cys120. Residue Asn144 is glycosylated (N-linked (GlcNAc...) asparagine). 2 disulfides stabilise this stretch: Cys183–Cys213 and Cys194–Cys205.

Belongs to the RNase T2 family.

Its subcellular location is the lysosome. It carries out the reaction a ribonucleotidyl-ribonucleotide-RNA + H2O = a 3'-end 3'-phospho-ribonucleotide-RNA + a 5'-end dephospho-ribonucleoside-RNA + H(+). Inhibited by Cu(2+) and Zn(2+). Its function is as follows. Releases mononucleotides from RNA in the order of 3'-GMP &gt; 3'-UMP &gt; 3'-AMP &gt; 3'-CMP. This chain is Ribonuclease DdI (ddiA), found in Dictyostelium discoideum (Social amoeba).